The following is a 286-amino-acid chain: Cytosolic 5'-nucleotidase 3 (286 aa).

The active-site Nucleophile is Asp38. 2 residues coordinate Mg(2+): Asp38 and Asp40. Asp40 acts as the Proton donor in catalysis. Substrate-binding positions include Glu85, Ser106, 153 to 154 (SA), and Lys202. Residue Asp227 participates in Mg(2+) binding.

The protein belongs to the pyrimidine 5'-nucleotidase family.

It localises to the cytoplasm. The catalysed reaction is a ribonucleoside 5'-phosphate + H2O = a ribonucleoside + phosphate. In terms of biological role, can act both as nucleotidase and as phosphotransferase. The sequence is that of Cytosolic 5'-nucleotidase 3 (nt5c3) from Danio rerio (Zebrafish).